Here is a 784-residue protein sequence, read N- to C-terminus: Probable leucine-rich repeat receptor-like protein kinase IMK3 (784 aa).

Residues 1 to 48 (MEFITQNQAITSLSMINTDIDQPKASLRSRFLLHLIICLLFFVPPCSS) form the signal peptide. The Extracellular portion of the chain corresponds to 49–409 (QAWDGVVITQ…PSHRNLSTKD (361 aa)). N-linked (GlcNAc...) asparagine glycosylation occurs at Asn-82. LRR repeat units follow at residues 126 to 148 (ALRKLSLHDNNLGGSIPMSLGLI), 150 to 172 (NLRGVQLFNNRLTGSIPASLGVS), 174 to 197 (FLQTLDLSNNLLSEIIPPNLADSS), 198 to 220 (KLLRLNLSFNSLSGQIPVSLSRS), 222 to 242 (SLQFLALDHNNLSGPILDTWG), 247 to 268 (NLRVLSLDHNSLSGPFPFSLCN), 271 to 294 (QLQDFSFSHNRIRGTLPSELSKLT), 295 to 317 (KLRKMDISGNSVSGHIPETLGNI), 319 to 342 (SLIHLDLSQNKLTGEIPISISDLE), and 343 to 365 (SLNFFNVSYNNLSGPVPTLLSQK). 3 N-linked (GlcNAc...) asparagine glycosylation sites follow: Asn-203, Asn-232, and Asn-268. Residue Asn-316 is glycosylated (N-linked (GlcNAc...) asparagine). 4 N-linked (GlcNAc...) asparagine glycosylation sites follow: Asn-348, Asn-353, Asn-367, and Asn-404. The helical transmembrane segment at 410 to 430 (IILIASGALLIVMLILVCVLC) threads the bilayer. The Cytoplasmic segment spans residues 431–784 (CLLRKKANET…VPEASASTSQ (354 aa)). The tract at residues 441-467 (KAKGGEAGPGAVAAKTEKGGEAEAGGE) is disordered. Residues 488 to 773 (CATAEIMGKS…TTATTSEPLI (286 aa)) form the Protein kinase domain. ATP contacts are provided by residues 494–502 (MGKSTYGTV) and Lys-516. The tract at residues 760–784 (RPEETTATTSEPLIDVPEASASTSQ) is disordered.

This sequence belongs to the protein kinase superfamily. Ser/Thr protein kinase family. As to quaternary structure, interacts with AGL24. Autophosphorylated. In terms of tissue distribution, expressed in meristems, including roots, vegetative, inflorescence and floral meristems, and in embryos.

Its subcellular location is the cell membrane. It catalyses the reaction L-seryl-[protein] + ATP = O-phospho-L-seryl-[protein] + ADP + H(+). The enzyme catalyses L-threonyl-[protein] + ATP = O-phospho-L-threonyl-[protein] + ADP + H(+). Its function is as follows. Can phosphorylate AGL24. This is Probable leucine-rich repeat receptor-like protein kinase IMK3 (IMK3) from Arabidopsis thaliana (Mouse-ear cress).